Consider the following 191-residue polypeptide: Apoptosis regulator BHRF1 (191 aa).

Positions 1-18 are interaction with host VRK2; sequence MAYSTREILLALCIRDSR. N22 carries N-linked (GlcNAc...) asparagine; by host glycosylation. The short motif at 89–109 is the BH1 element; sequence EIFHRGDPSLGRALAWMAWCM. Residues 89-142 form an interaction with host VRK2 region; that stretch reads EIFHRGDPSLGRALAWMAWCMHACRTLCCNQSTPYYVVDLSVRGMLEASEGLDG. N118 carries an N-linked (GlcNAc...) asparagine; by host glycan. The short motif at 142–157 is the BH2 element; sequence GWIHQQGGWSTLIEDN. The helical transmembrane segment at 166–186 threads the bilayer; it reads WTLFLAGLTLSLLVICSYLFI.

It belongs to the Bcl-2 family. In terms of assembly, interacts with isoform 1 of host VRK2; this interaction is involved in protecting cells from apoptosis. Interacts with host PRA1; this interaction seems to modulate BHRF1 anti-apoptotic activity. Interacts with host BCL2L11. Interacts with host BAD and BBC3. Interacts with BALF1; BALF1 acting as a negative regulator of the survival function of BHRF1. Interacts with host BECN1.

The protein resides in the host membrane. It localises to the host mitochondrion. Functionally, prevents premature death of the host cell during virus production, which would otherwise reduce the amount of progeny virus. Acts as a host B-cell leukemia/lymphoma 2 (Bcl-2) homolog, and interacts with pro-apoptotic proteins to prevent mitochondria permeabilization, release of cytochrome c and subsequent apoptosis of the host cell. In addition, plays a role in the inhibiton of host BECN1-mediated starvation-induced autophagy without affecting basal levels of autophagy. In Epstein-Barr virus (strain GD1) (HHV-4), this protein is Apoptosis regulator BHRF1.